The sequence spans 988 residues: UPF0182 protein MAB_3498c (988 aa).

7 helical membrane-spanning segments follow: residues Leu-19 to Thr-39, Leu-63 to Leu-83, Leu-114 to Tyr-134, Phe-176 to Ile-196, Ile-211 to Asp-231, Lys-260 to Leu-280, and Ile-288 to Val-308.

It belongs to the UPF0182 family.

The protein localises to the cell membrane. This chain is UPF0182 protein MAB_3498c, found in Mycobacteroides abscessus (strain ATCC 19977 / DSM 44196 / CCUG 20993 / CIP 104536 / JCM 13569 / NCTC 13031 / TMC 1543 / L948) (Mycobacterium abscessus).